A 102-amino-acid polypeptide reads, in one-letter code: Glutaredoxin 1 (102 aa).

Residues 1 to 96 (MNKAILHTII…KLLEGQPKKK (96 aa)) form the Glutaredoxin domain. Cys-17 and Cys-20 are oxidised to a cystine.

This sequence belongs to the glutaredoxin family. Monomer.

Its subcellular location is the cytoplasm. Has a glutathione-disulfide oxidoreductase activity in the presence of NADPH and glutathione reductase. Reduces low molecular weight disulfides and proteins. The sequence is that of Glutaredoxin 1 (grxC1) from Rickettsia felis (strain ATCC VR-1525 / URRWXCal2) (Rickettsia azadi).